Here is a 420-residue protein sequence, read N- to C-terminus: Serine hydroxymethyltransferase (420 aa).

Residues Leu-121 and Gly-125–Leu-127 each bind (6S)-5,6,7,8-tetrahydrofolate. An N6-(pyridoxal phosphate)lysine modification is found at Lys-230. Residues Glu-246 and Ser-354–Phe-356 contribute to the (6S)-5,6,7,8-tetrahydrofolate site.

The protein belongs to the SHMT family. In terms of assembly, homodimer. Pyridoxal 5'-phosphate is required as a cofactor.

Its subcellular location is the cytoplasm. The enzyme catalyses (6R)-5,10-methylene-5,6,7,8-tetrahydrofolate + glycine + H2O = (6S)-5,6,7,8-tetrahydrofolate + L-serine. It functions in the pathway one-carbon metabolism; tetrahydrofolate interconversion. Its pathway is amino-acid biosynthesis; glycine biosynthesis; glycine from L-serine: step 1/1. Functionally, catalyzes the reversible interconversion of serine and glycine with tetrahydrofolate (THF) serving as the one-carbon carrier. This reaction serves as the major source of one-carbon groups required for the biosynthesis of purines, thymidylate, methionine, and other important biomolecules. Also exhibits THF-independent aldolase activity toward beta-hydroxyamino acids, producing glycine and aldehydes, via a retro-aldol mechanism. The protein is Serine hydroxymethyltransferase of Rickettsia typhi (strain ATCC VR-144 / Wilmington).